The chain runs to 425 residues: Riboflavin biosynthesis protein RibBA (425 aa).

Positions methionine 1 to lysine 204 are DHBP synthase. D-ribulose 5-phosphate contacts are provided by residues arginine 28–glutamate 29, aspartate 33, arginine 141–threonine 145, and glutamate 165. A Mg(2+)-binding site is contributed by glutamate 29. Residue histidine 144 participates in Mg(2+) binding. The segment at histidine 205–leucine 425 is GTP cyclohydrolase II. A GTP-binding site is contributed by arginine 259 to glutamate 263. 3 residues coordinate Zn(2+): cysteine 264, cysteine 275, and cysteine 277. Residues glutamine 280, glutamate 303–arginine 305, and threonine 325 contribute to the GTP site. Catalysis depends on aspartate 337, which acts as the Proton acceptor; for GTP cyclohydrolase activity. The active-site Nucleophile; for GTP cyclohydrolase activity is arginine 339. The GTP site is built by threonine 360 and lysine 365.

It in the N-terminal section; belongs to the DHBP synthase family. This sequence in the C-terminal section; belongs to the GTP cyclohydrolase II family. The cofactor is Mg(2+). Requires Mn(2+) as cofactor. It depends on Zn(2+) as a cofactor.

It catalyses the reaction D-ribulose 5-phosphate = (2S)-2-hydroxy-3-oxobutyl phosphate + formate + H(+). The enzyme catalyses GTP + 4 H2O = 2,5-diamino-6-hydroxy-4-(5-phosphoribosylamino)-pyrimidine + formate + 2 phosphate + 3 H(+). It functions in the pathway cofactor biosynthesis; riboflavin biosynthesis; 2-hydroxy-3-oxobutyl phosphate from D-ribulose 5-phosphate: step 1/1. It participates in cofactor biosynthesis; riboflavin biosynthesis; 5-amino-6-(D-ribitylamino)uracil from GTP: step 1/4. Its function is as follows. Catalyzes the conversion of D-ribulose 5-phosphate to formate and 3,4-dihydroxy-2-butanone 4-phosphate. Functionally, catalyzes the conversion of GTP to 2,5-diamino-6-ribosylamino-4(3H)-pyrimidinone 5'-phosphate (DARP), formate and pyrophosphate. In Mycobacterium ulcerans (strain Agy99), this protein is Riboflavin biosynthesis protein RibBA.